Reading from the N-terminus, the 1473-residue chain is Ovostatin (1473 aa).

An N-terminal signal peptide occupies residues 1–36 (MHCFLGREILSFFCLTVRKMWLKFILAILLLHAAAG). Asparagine 67, asparagine 82, asparagine 89, asparagine 191, asparagine 342, asparagine 403, asparagine 527, asparagine 588, asparagine 757, asparagine 1141, asparagine 1221, asparagine 1315, and asparagine 1347 each carry an N-linked (GlcNAc...) asparagine glycan.

This sequence belongs to the protease inhibitor I39 (alpha-2-macroglobulin) family. In terms of assembly, homotetramer, which consists of two pairs of disulfide-linked chains. In terms of processing, lacks the thioester bond found in other members of this family. Post-translationally, glycosylated; contains 56 glucosamine units per subunit.

The protein resides in the secreted. Functionally, is able to inhibit all four classes of proteinases by a unique 'trapping' mechanism. This protein has a peptide stretch, called the 'bait region' which contains specific cleavage sites for different proteinases. When a proteinase cleaves the bait region, a conformational change is induced in the protein which traps the proteinase. The entrapped enzyme remains active against low molecular weight substrates (activity against high molecular weight substrates is greatly reduced). The chain is Ovostatin from Gallus gallus (Chicken).